Here is a 393-residue protein sequence, read N- to C-terminus: NAD(P)H-quinone oxidoreductase subunit H, chloroplastic (393 aa).

Belongs to the complex I 49 kDa subunit family. As to quaternary structure, NDH is composed of at least 16 different subunits, 5 of which are encoded in the nucleus.

The protein localises to the plastid. The protein resides in the chloroplast thylakoid membrane. The catalysed reaction is a plastoquinone + NADH + (n+1) H(+)(in) = a plastoquinol + NAD(+) + n H(+)(out). It carries out the reaction a plastoquinone + NADPH + (n+1) H(+)(in) = a plastoquinol + NADP(+) + n H(+)(out). In terms of biological role, NDH shuttles electrons from NAD(P)H:plastoquinone, via FMN and iron-sulfur (Fe-S) centers, to quinones in the photosynthetic chain and possibly in a chloroplast respiratory chain. The immediate electron acceptor for the enzyme in this species is believed to be plastoquinone. Couples the redox reaction to proton translocation, and thus conserves the redox energy in a proton gradient. This Vitis vinifera (Grape) protein is NAD(P)H-quinone oxidoreductase subunit H, chloroplastic.